The primary structure comprises 251 residues: MGQKVNPTGFRLGIIKDWTSRWYDDSPVISEKIKQDHVIRNYVLARLKREKAGIARIVIERTTKHVKINIYAARPGAVVGRKGEEINNLSQELTRITGKEVKIDVVEVIKPEIEAQLIGDNIAYQLENRVSFRRAMKQAIQQAMRAGAEGIRIRCAGRLGGAEIARAEQYKEGKIPLHTIRANIDYASVTAHTIAGTIGIKVWVYKGEVLVQRIDAIEEDEMKRMKDRRADSKSRPRDPRSKRRRSRTKRA.

The KH type-2 domain maps to Ile39–Ile109. The span at Glu221 to Pro239 shows a compositional bias: basic and acidic residues. The segment at Glu221–Ala251 is disordered. Basic residues predominate over residues Arg240–Ala251.

This sequence belongs to the universal ribosomal protein uS3 family. In terms of assembly, part of the 30S ribosomal subunit. Forms a tight complex with proteins S10 and S14.

Binds the lower part of the 30S subunit head. Binds mRNA in the 70S ribosome, positioning it for translation. The protein is Small ribosomal subunit protein uS3 of Chlorobium limicola (strain DSM 245 / NBRC 103803 / 6330).